The primary structure comprises 214 residues: Riboflavin kinase (214 aa).

Residues 1-26 (MRPDGPRDPVAGPDSGPEPPYPVRLS) are disordered. Positions 44 and 46 each coordinate Mg(2+). E116 functions as the Nucleophile in the catalytic mechanism.

Belongs to the flavokinase family. Requires Zn(2+) as cofactor. Mg(2+) is required as a cofactor.

The enzyme catalyses riboflavin + ATP = FMN + ADP + H(+). It functions in the pathway cofactor biosynthesis; FMN biosynthesis; FMN from riboflavin (ATP route): step 1/1. Functionally, catalyzes the phosphorylation of riboflavin (vitamin B2) to form flavin mononucleotide (FMN) coenzyme. This is Riboflavin kinase (fmn1) from Aspergillus fumigatus (strain ATCC MYA-4609 / CBS 101355 / FGSC A1100 / Af293) (Neosartorya fumigata).